Reading from the N-terminus, the 492-residue chain is Trichothecene C-15 hydroxylase (492 aa).

The helical transmembrane segment at Leu-6 to Val-26 threads the bilayer. Positions Ala-88–Asp-106 are enriched in basic and acidic residues. The tract at residues Ala-88–Asn-116 is disordered. Asn-124, Asn-198, and Asn-290 each carry an N-linked (GlcNAc...) asparagine glycan. Cys-438 is a heme binding site.

It belongs to the cytochrome P450 family. The cofactor is heme.

It is found in the membrane. It participates in sesquiterpene biosynthesis; trichothecene biosynthesis. Its function is as follows. Trichothecene C-15 hydroxylase; part of the core gene cluster that mediates the biosynthesis of trichothecenes, a very large family of chemically related bicyclic sesquiterpene compounds acting as mycotoxins, including T2-toxin. The biosynthesis of trichothecenes begins with the cyclization of farnesyl diphosphate to trichodiene and is catalyzed by the trichodiene synthase TRI5. Trichodiene undergoes a series of oxygenations catalyzed by the cytochrome P450 monooxygenase TRI4. TRI4 controls the addition of four oxygens at C-2, C-3, C-11, and the C-12, C-13-epoxide to form the intermediate isotrichotriol. Isotrichotriol then undergoes a non-enzymatic isomerization and cyclization to form isotrichodermol. During this process, the oxygen at the C-2 position becomes the pyran ring oxygen and the hydroxyl group at C-11 is lost. More complex type A trichothecenes are built by modifying isotrichodermol through a series of paired hydroxylation and acetylation or acylation steps. Isotrichodermol is converted to isotrichodermin by the acetyltransferase TRI101. TRI101 encodes a C-3 transacetylase that acts as a self-protection or resistance factor during biosynthesis and that the presence of a free C-3 hydroxyl group is a key component of Fusarium trichothecene phytotoxicity. A second hydroxyl group is added to C-15 by the trichothecene C-15 hydroxylase TRI11, producing 15-decalonectrin, which is then acetylated by TRI3, producing calonectrin. A third hydroxyl group is added at C-4 by the cytochrome P450 monooxygenase TRI13, converting calonectrin to 3,15-diacetoxyspirpenol, which is subsequently acetylated by the acetyltransferase TRI7. A fourth hydroxyl group is added to C-8 by the cytochrome P450 monooxygenase TRI1, followed by the addition of an isovaleryl moiety by TRI16. Finally, the acetyl group is removed from the C-3 position by the trichothecene C-3 esterase TRI8 to produce T-2 toxin. This chain is Trichothecene C-15 hydroxylase, found in Fusarium sporotrichioides.